Consider the following 500-residue polypeptide: Zinc finger protein ENHYDROUS (500 aa).

A disordered region spans residues 1 to 42 (MPVDLDNSSTVSGDASVSSTGNQNLTPKSVGKKKRNLPGMPD). A compositionally biased stretch (low complexity) spans 8–21 (SSTVSGDASVSSTG). Serine 51 bears the Phosphoserine mark. 2 C2H2-type zinc fingers span residues 61–83 (FVCE…RRGH) and 102–132 (YVCP…CRKH). The Nuclear localization signal motif lies at 124 to 131 (IKKHFCRK). The C2H2-type 2; degenerate zinc finger occupies 137–160 (WKCEKCSKKYAVQSDWKAHSKICG). 8 residues coordinate Zn(2+): cysteine 139, cysteine 142, histidine 155, cysteine 159, cysteine 166, cysteine 168, histidine 181, and cysteine 185. Residues 164-187 (YKCDCGTLFSRRDSFITHRAFCDA) form a CCHC-type 2; atypical zinc finger. The interval 174–186 (RRDSFITHRAFCD) is SHR-binding. The segment at 196 to 236 (HTQSKKLYPETVTRKNPEIEQKSPAAVESSPSLPPSSPPSV) is disordered. A compositionally biased stretch (basic and acidic residues) spans 207–216 (VTRKNPEIEQ).

Interacts with the DELLA proteins (e.g. GAI/RGA2, RGA, RGL1, RGL2 and RGLG3), acting as coactivators. At 3 days post anthesis (DPA), expressed in the chalazal endosperm region. By 6 DPA, expressed in the endosperm and embryo. In fully germinated seed, strongest expression in the root tip and not detected in the cotyledons. In 4-days old seedlings, restricted to the vasculature of the cotyledons, the shoot apical meristem region, and the root tip. By 8 days, restricted to newly emerged leaves.

The protein resides in the nucleus. Its function is as follows. Transcription factor promoting the transition to germination by regulating light and hormonal signaling during seed maturation. Acts as a positive regulator of phytochrome and/or gibberellin action. The sequence is that of Zinc finger protein ENHYDROUS from Arabidopsis thaliana (Mouse-ear cress).